The following is a 355-amino-acid chain: Uroporphyrinogen decarboxylase (355 aa).

Substrate contacts are provided by residues 27-31 (RQAGR), D78, Y155, S210, and H328.

The protein belongs to the uroporphyrinogen decarboxylase family. As to quaternary structure, homodimer.

The protein resides in the cytoplasm. The enzyme catalyses uroporphyrinogen III + 4 H(+) = coproporphyrinogen III + 4 CO2. It functions in the pathway porphyrin-containing compound metabolism; protoporphyrin-IX biosynthesis; coproporphyrinogen-III from 5-aminolevulinate: step 4/4. Its function is as follows. Catalyzes the decarboxylation of four acetate groups of uroporphyrinogen-III to yield coproporphyrinogen-III. In Pseudomonas aeruginosa (strain UCBPP-PA14), this protein is Uroporphyrinogen decarboxylase.